The sequence spans 23 residues: Phallacidin proprotein 1 (23 aa).

A propeptide is located at residue Pro1. Residues 2-8 (AWLVDCP) constitute a cross-link (cyclopeptide (Ala-Pro)). Positions 3–7 (WLVDC) form a cross-link, 2'-cysteinyl-6'-hydroxytryptophan sulfoxide (Trp-Cys). Residues 9 to 23 (CVGDDINRLLTRGEK) constitute a propeptide that is removed on maturation.

Belongs to the MSDIN fungal toxin family. Processed by the macrocyclase-peptidase enzyme POPB to yield a toxic cyclic heptapeptide. POPB first removes 10 residues from the N-terminus. Conformational trapping of the remaining peptide forces the enzyme to release this intermediate rather than proceed to macrocyclization. The enzyme rebinds the remaining peptide in a different conformation and catalyzes macrocyclization of the N-terminal 7 residues.

In terms of biological role, major toxin that belongs to the bicyclic heptapeptides called phallotoxins. Although structurally related to amatoxins, phallotoxins have a different mode of action, which is the stabilization of F-actin. Phallotoxins are poisonous when administered parenterally, but not orally because of poor absorption. The sequence is that of Phallacidin proprotein 1 from Amanita phalloides (Death cap).